The primary structure comprises 347 residues: Quinolinate synthase (347 aa).

Iminosuccinate-binding residues include histidine 47 and serine 68. Residue cysteine 113 coordinates [4Fe-4S] cluster. Residues 139–141 (YAN) and serine 156 each bind iminosuccinate. Cysteine 200 is a binding site for [4Fe-4S] cluster. Residues 226–228 (HPE) and threonine 243 contribute to the iminosuccinate site. Cysteine 297 serves as a coordination point for [4Fe-4S] cluster.

Belongs to the quinolinate synthase family. Type 1 subfamily. It depends on [4Fe-4S] cluster as a cofactor.

The protein resides in the cytoplasm. It carries out the reaction iminosuccinate + dihydroxyacetone phosphate = quinolinate + phosphate + 2 H2O + H(+). It functions in the pathway cofactor biosynthesis; NAD(+) biosynthesis; quinolinate from iminoaspartate: step 1/1. Catalyzes the condensation of iminoaspartate with dihydroxyacetone phosphate to form quinolinate. This chain is Quinolinate synthase, found in Escherichia coli O157:H7.